The following is a 1158-amino-acid chain: ATP-dependent helicase/deoxyribonuclease subunit B (1158 aa).

The UvrD-like helicase ATP-binding domain maps to 1–275 (MTLHAYLGRA…QYFNQLYRFN (275 aa)). 8-15 (GRAGTGKS) lines the ATP pocket. The 315-residue stretch at 269 to 583 (NQLYRFNNQD…SIGTMDLAKV (315 aa)) folds into the UvrD-like helicase C-terminal domain. Residues C784, C1112, C1115, and C1121 each contribute to the [4Fe-4S] cluster site.

It belongs to the helicase family. AddB/RexB type 1 subfamily. Heterodimer of AddA and AddB. Mg(2+) serves as cofactor. The cofactor is [4Fe-4S] cluster.

In terms of biological role, the heterodimer acts as both an ATP-dependent DNA helicase and an ATP-dependent, dual-direction single-stranded exonuclease. Recognizes the chi site generating a DNA molecule suitable for the initiation of homologous recombination. The AddB subunit has 5' -&gt; 3' nuclease activity but not helicase activity. This is ATP-dependent helicase/deoxyribonuclease subunit B from Staphylococcus aureus (strain MSSA476).